The following is a 59-amino-acid chain: Large ribosomal subunit protein bL33 (59 aa).

This sequence belongs to the bacterial ribosomal protein bL33 family.

The sequence is that of Large ribosomal subunit protein bL33 from Borreliella afzelii (strain PKo) (Borrelia afzelii).